The sequence spans 555 residues: High-affinity gluconate transporter ght3 (555 aa).

Topologically, residues 1 to 9 (MNRFITSIL) are cytoplasmic. Residues 10 to 30 (VVFISMSGWLQGADTGSISGI) traverse the membrane as a helical segment. At 31–58 (LGMRDFQSRFADRYNPISNSYSYSAWRQ) the chain is on the extracellular side. Residues 59–79 (ALLTGTINAGCLFGAMLSSPF) traverse the membrane as a helical segment. Topologically, residues 80 to 87 (TERIGKKY) are cytoplasmic. The chain crosses the membrane as a helical span at residues 88–108 (SICFFSGVYIIAELLLVTAVP). Residues 109–112 (SWIQ) are Extracellular-facing. The chain crosses the membrane as a helical span at residues 113 to 133 (VLVGKILAGVGIGALSVLSPG). Topologically, residues 134 to 144 (YQSEVAPPQIR) are cytoplasmic. The helical transmembrane segment at 145–165 (GAVVATYQIFSTGAALVAACI) threads the bilayer. At 166 to 179 (NMGTHKLRKTASWR) the chain is on the extracellular side. The chain crosses the membrane as a helical span at residues 180–200 (TSFGINMLWGILLMVGVLFLP). Residues 201-266 (ESPRYLIYKG…IFGKDIRYRT (66 aa)) are Cytoplasmic-facing. A helical transmembrane segment spans residues 267–285 (CLGFLVMLFRELIGNNYYF). The Extracellular segment spans residues 286–301 (YYATQVFKGTGMTDIF). Residues 302–322 (LPAVILGAINFGTTFGALYTI) traverse the membrane as a helical segment. At 323 to 328 (DNLGRR) the chain is on the cytoplasmic side. A helical transmembrane segment spans residues 329–349 (NPLIFGAAFQSICFFIYAAVG). Residues 350–363 (DRKLIYKNGTSDHR) lie on the Extracellular side of the membrane. A glycan (N-linked (GlcNAc...) asparagine) is linked at Asn357. The helical transmembrane segment at 364 to 384 (AGSVMIVFSCLFLFSYCCSWG) threads the bilayer. At 385–404 (PMGWVIVGETFPIRYRSKCA) the chain is on the cytoplasmic side. Residues 405–425 (SVATSGNWLGNFMISFFTPFI) form a helical membrane-spanning segment. At 426 to 432 (NNAIGFK) the chain is on the extracellular side. Residues 433-453 (LGYIYACINLFSSFMIFFLAK) traverse the membrane as a helical segment. At 454-555 (ETKGLTLEEV…FSEDSHPTYI (102 aa)) the chain is on the cytoplasmic side. The segment covering 492–509 (KEEEKREREKSKGIRGQE) has biased composition (basic and acidic residues). The tract at residues 492-555 (KEEEKREREK…FSEDSHPTYI (64 aa)) is disordered. Positions 510 to 521 (EEFIENADEDNN) are enriched in acidic residues. Low complexity predominate over residues 522–534 (DSSSSSGSVVSAV). Over residues 545 to 555 (RFSEDSHPTYI) the composition is skewed to basic and acidic residues.

It belongs to the major facilitator superfamily. Sugar transporter (TC 2.A.1.1) family.

The protein resides in the membrane. High-affinity gluconate transporter. This Schizosaccharomyces pombe (strain 972 / ATCC 24843) (Fission yeast) protein is High-affinity gluconate transporter ght3 (ght3).